The chain runs to 82 residues: Small ribosomal subunit protein bS16c (82 aa).

It belongs to the bacterial ribosomal protein bS16 family.

It is found in the plastid. Its subcellular location is the chloroplast. In Porphyra purpurea (Red seaweed), this protein is Small ribosomal subunit protein bS16c.